The sequence spans 341 residues: HTH-type transcriptional repressor PurR (341 aa).

One can recognise an HTH lacI-type domain in the interval 2-56 (ATIKDVAKRAGVSTTTVSHVINKTRFVADETREAVWVAIKELHYSPSAVARSLKV). A DNA-binding region (H-T-H motif) is located at residues 4–23 (IKDVAKRAGVSTTTVSHVIN). A DNA-binding region spans residues 48 to 56 (SAVARSLKV). Residues Y73, R190, T192, F221, and D275 each coordinate hypoxanthine.

As to quaternary structure, homodimer.

It functions in the pathway purine metabolism; purine nucleotide biosynthesis [regulation]. Its function is as follows. Is the main repressor of the genes involved in the de novo synthesis of purine nucleotides, regulating purB, purC, purEK, purF, purHD, purL, purMN and guaBA expression. PurR is allosterically activated to bind its cognate DNA by binding the purine corepressors, hypoxanthine or guanine, thereby effecting transcription repression. This chain is HTH-type transcriptional repressor PurR, found in Erwinia tasmaniensis (strain DSM 17950 / CFBP 7177 / CIP 109463 / NCPPB 4357 / Et1/99).